Reading from the N-terminus, the 744-residue chain is NAD(P)H-quinone oxidoreductase subunit 5, chloroplastic (744 aa).

16 helical membrane passes run 9-29, 40-60, 89-109, 125-145, 147-167, 185-205, 219-239, 258-278, 290-312, 327-347, 354-374, 396-416, 425-445, 549-569, 608-628, and 724-744; these read WIIPFLPLPVPMLIGLGLLFF, WAFQSVLLLSIVMIFSINLSI, IDPLTSIMSILITTVGIMVLI, FAYMSFFSTSMLGLVTSSNLI, IYIFWELVGIRSYLLIGFWFT, GDFGLLLGILGFYWITGSFEF, NEVNFLFVTLCAVLLFAGAIA, TPISALIHAATMVAAGIFLVA, IMNFISLIGIITVFLGATLALAQ, LGYMMLALGMGSYRSALFHLI, ALLFLGSGSVIHSMETLVGYC, TSFFLGTLSLCGIPPLACFWS, WLYSPIFAIIAWSTAGLTAFY, LFPILILVLFTLFVGFLGIPF, VFSVSISSFGIFIAFFLYKPV, and YLFFYFSYLSFFLLIYYFFHF.

It belongs to the complex I subunit 5 family. As to quaternary structure, NDH is composed of at least 16 different subunits, 5 of which are encoded in the nucleus.

It localises to the plastid. It is found in the chloroplast thylakoid membrane. It catalyses the reaction a plastoquinone + NADH + (n+1) H(+)(in) = a plastoquinol + NAD(+) + n H(+)(out). The enzyme catalyses a plastoquinone + NADPH + (n+1) H(+)(in) = a plastoquinol + NADP(+) + n H(+)(out). Functionally, NDH shuttles electrons from NAD(P)H:plastoquinone, via FMN and iron-sulfur (Fe-S) centers, to quinones in the photosynthetic chain and possibly in a chloroplast respiratory chain. The immediate electron acceptor for the enzyme in this species is believed to be plastoquinone. Couples the redox reaction to proton translocation, and thus conserves the redox energy in a proton gradient. The sequence is that of NAD(P)H-quinone oxidoreductase subunit 5, chloroplastic (ndhF) from Gerbera jamesonii (Transvaal daisy).